Reading from the N-terminus, the 144-residue chain is Large ribosomal subunit protein uL15 (144 aa).

Positions 1–52 (MRLNSLSPAEGAKHSAKRLGRGISSGLGKTGGRGHKGQKSRTGGGVRRGFEG) are disordered.

The protein belongs to the universal ribosomal protein uL15 family. Part of the 50S ribosomal subunit.

In terms of biological role, binds to the 23S rRNA. In Actinobacillus pleuropneumoniae serotype 7 (strain AP76), this protein is Large ribosomal subunit protein uL15.